A 509-amino-acid chain; its full sequence is Bifunctional purine biosynthesis protein PurH (509 aa).

The MGS-like domain occupies 1-144 (MKRALISVSD…KNYAAVTVVV (144 aa)).

Belongs to the PurH family.

It catalyses the reaction (6R)-10-formyltetrahydrofolate + 5-amino-1-(5-phospho-beta-D-ribosyl)imidazole-4-carboxamide = 5-formamido-1-(5-phospho-D-ribosyl)imidazole-4-carboxamide + (6S)-5,6,7,8-tetrahydrofolate. It carries out the reaction IMP + H2O = 5-formamido-1-(5-phospho-D-ribosyl)imidazole-4-carboxamide. Its pathway is purine metabolism; IMP biosynthesis via de novo pathway; 5-formamido-1-(5-phospho-D-ribosyl)imidazole-4-carboxamide from 5-amino-1-(5-phospho-D-ribosyl)imidazole-4-carboxamide (10-formyl THF route): step 1/1. It functions in the pathway purine metabolism; IMP biosynthesis via de novo pathway; IMP from 5-formamido-1-(5-phospho-D-ribosyl)imidazole-4-carboxamide: step 1/1. This chain is Bifunctional purine biosynthesis protein PurH, found in Listeria welshimeri serovar 6b (strain ATCC 35897 / DSM 20650 / CCUG 15529 / CIP 8149 / NCTC 11857 / SLCC 5334 / V8).